Reading from the N-terminus, the 353-residue chain is Tectonin-2 (353 aa).

Positions 44–93 (WIFDNDGYIRLAANHNLVLDVNGGAAKEGNTVLSYPDKKDHAKNQLWVNK) constitute a Ricin B-type lectin domain. Tandem repeats lie at residues 138-173 (SAWERHEGELNVVAVGAGNHDVWGVNHLEHIYHWDG), 174-210 (SKWHQIEGAATNISVGLDGTVWCVNKAHEIYRLDRGT), 211-247 (NKWSIVPGELVQVSVGNSHNIWGVNHLDAIYKWNADS), 248-282 (NSWTFVDGQLTNVSVGHDGTVYGVNRAGNIYHYNG), 283-318 (NSWDAVSGELVQIHVANKDLIVGVNKAGHVYRLKHG), and 319-353 (KDWEKLEGELSWVAVGHGGELWGANSAHNIYKALL). A 6 X approximate tandem repeats region spans residues 138 to 353 (SAWERHEGEL…SAHNIYKALL (216 aa)).

This sequence belongs to the tectonin family.

Its subcellular location is the cell surface. It is found in the cytoplasmic vesicle membrane. Probably involved in bacterial recognition. May be a lectin that function as part of a transmembrane signaling complex during phagocytosis. The protein is Tectonin-2 (TECB) of Physarum polycephalum (Slime mold).